A 209-amino-acid chain; its full sequence is Ribonuclease HII (209 aa).

Residues 18 to 209 (GLIAGVDEVG…FKPVKALLEG (192 aa)) form the RNase H type-2 domain. A divalent metal cation contacts are provided by D24, E25, and D116.

This sequence belongs to the RNase HII family. Requires Mn(2+) as cofactor. Mg(2+) is required as a cofactor.

It localises to the cytoplasm. It carries out the reaction Endonucleolytic cleavage to 5'-phosphomonoester.. Its function is as follows. Endonuclease that specifically degrades the RNA of RNA-DNA hybrids. The sequence is that of Ribonuclease HII from Shewanella putrefaciens (strain CN-32 / ATCC BAA-453).